Consider the following 397-residue polypeptide: 3-hydroxy-3-methylglutaryl-coenzyme A reductase (397 aa).

Catalysis depends on charge relay system residues Glu-96 and Asp-301. Residue His-391 is the Proton donor of the active site.

It belongs to the HMG-CoA reductase family.

The enzyme catalyses (R)-mevalonate + 2 NADP(+) + CoA = (3S)-3-hydroxy-3-methylglutaryl-CoA + 2 NADPH + 2 H(+). It participates in metabolic intermediate biosynthesis; (R)-mevalonate biosynthesis; (R)-mevalonate from acetyl-CoA: step 3/3. Converts HMG-CoA to mevalonate. The sequence is that of 3-hydroxy-3-methylglutaryl-coenzyme A reductase (hmgA) from Methanothermobacter thermautotrophicus (strain ATCC 29096 / DSM 1053 / JCM 10044 / NBRC 100330 / Delta H) (Methanobacterium thermoautotrophicum).